A 476-amino-acid polypeptide reads, in one-letter code: CBL-interacting protein kinase 30 (476 aa).

A Protein kinase domain is found at 17–272 (YKLGRLLGRG…ISKIMDRPWF (256 aa)). ATP contacts are provided by residues 23–31 (LGRGTFAKV) and Lys-46. The Proton acceptor role is filled by Asp-140. Residues 158–187 (DFGLSALDGGLRGDGLLHTTCGTPAYVAPE) are activation loop. A disordered region spans residues 296 to 315 (KEASQQHDDEEDDGFAREKK). An NAF domain is found at 299–353 (SQQHDDEEDDGFAREKKKRSNVIMSSPVIDVRPSSMNAFDIISRSRGLDLSKMFD). The PPI stretch occupies residues 358 to 387 (RSEARFSTRETTTAIVSKLEEIAEAGRFSF).

This sequence belongs to the protein kinase superfamily. CAMK Ser/Thr protein kinase family. SNF1 subfamily. The cofactor is Mn(2+).

The enzyme catalyses L-seryl-[protein] + ATP = O-phospho-L-seryl-[protein] + ADP + H(+). It carries out the reaction L-threonyl-[protein] + ATP = O-phospho-L-threonyl-[protein] + ADP + H(+). CIPK serine-threonine protein kinases interact with CBL proteins. Binding of a CBL protein to the regulatory NAF domain of CIPK protein lead to the activation of the kinase in a calcium-dependent manner. In Oryza sativa subsp. japonica (Rice), this protein is CBL-interacting protein kinase 30 (CIPK30).